The primary structure comprises 276 residues: Extracellular metalloprotease VDBG_07883 (276 aa).

Positions 1 to 17 are cleaved as a signal peptide; the sequence is MQSKFLWIAAASAATAA. Asn-70 and Asn-102 each carry an N-linked (GlcNAc...) asparagine glycan. Zn(2+) is bound at residue His-191. Glu-192 is a catalytic residue. His-195 lines the Zn(2+) pocket. Asn-222 carries an N-linked (GlcNAc...) asparagine glycan. An intrachain disulfide couples Cys-227 to Cys-254.

It belongs to the peptidase M43B family.

It is found in the secreted. Its function is as follows. Secreted metalloproteinase that allows assimilation of proteinaceous substrates. This Verticillium alfalfae (strain VaMs.102 / ATCC MYA-4576 / FGSC 10136) (Verticillium wilt of alfalfa) protein is Extracellular metalloprotease VDBG_07883.